Reading from the N-terminus, the 612-residue chain is Zinc metalloproteinase-disintegrin-like 2d (612 aa).

Residues 1 to 20 (MIQVLLVTICLAVFPYQGSS) form the signal peptide. The propeptide occupies 21–189 (IILGSGNVND…KKASQLNLTP (169 aa)). Positions 199-395 (KYIELVIVAD…NRPPCILNKP (197 aa)) constitute a Peptidase M12B domain. Glutamate 202 provides a ligand contact to Ca(2+). Asparagine 218 carries N-linked (GlcNAc...) asparagine glycosylation. Residue aspartate 286 coordinates Ca(2+). Intrachain disulfides connect cysteine 310–cysteine 390, cysteine 350–cysteine 374, and cysteine 352–cysteine 357. Residue histidine 335 participates in Zn(2+) binding. Glutamate 336 is a catalytic residue. Zn(2+) contacts are provided by histidine 339 and histidine 345. Ca(2+)-binding residues include cysteine 390, asparagine 393, valine 405, asparagine 408, phenylalanine 410, glutamate 412, glutamate 415, and aspartate 418. The 87-residue stretch at 403–489 (PPVCGNYFVE…DCPTDNFQRN (87 aa)) folds into the Disintegrin domain. Cystine bridges form between cysteine 406–cysteine 435, cysteine 417–cysteine 430, cysteine 419–cysteine 425, cysteine 429–cysteine 452, cysteine 443–cysteine 449, cysteine 448–cysteine 474, cysteine 461–cysteine 481, cysteine 468–cysteine 500, cysteine 493–cysteine 505, cysteine 512–cysteine 562, cysteine 527–cysteine 573, cysteine 540–cysteine 550, cysteine 557–cysteine 599, and cysteine 593–cysteine 605. The D/ECD-tripeptide signature appears at 467–469 (ECD).

This sequence belongs to the venom metalloproteinase (M12B) family. P-III subfamily. Requires Zn(2+) as cofactor. In terms of tissue distribution, expressed by the venom gland.

It is found in the secreted. Snake venom metalloproteinase that impairs hemostasis in the envenomed animal. The protein is Zinc metalloproteinase-disintegrin-like 2d of Crotalus adamanteus (Eastern diamondback rattlesnake).